Reading from the N-terminus, the 770-residue chain is Arf-GAP with coiled-coil, ANK repeat and PH domain-containing protein 2 (770 aa).

The region spanning 1-226 (MKMTVDFEEC…MKDLGAQLDR (226 aa)) is the BAR domain. A PH domain is found at 266–361 (GIVMEGYLFK…WIKAVQTSIA (96 aa)). Residues 371–391 (SEKLDKKSSPSTGSLDSGNES) form a disordered region. Residues 379–388 (SPSTGSLDSG) show a composition bias toward polar residues. Serine 384 and serine 387 each carry phosphoserine. Residues 399 to 520 (ESALQRVQCI…KFVDKYSALL (122 aa)) enclose the Arf-GAP domain. The C4-type zinc finger occupies 414 to 437 (CCDCGLADPRWASINLGITLCIEC). Serine 521 carries the post-translational modification Phosphoserine. Positions 542 to 572 (ARASVHTPVKSNDSGIQQCSEDGRESLPSTV) are disordered. The segment covering 550–561 (VKSNDSGIQQCS) has biased composition (polar residues). Phosphoserine occurs at positions 573 and 576. ANK repeat units lie at residues 632–661 (NQAT…NVNQ), 665–694 (QGRG…NQHA), and 698–727 (EGKD…NEEM). Residue tyrosine 734 is modified to Phosphotyrosine. Position 767 is a phosphoserine (serine 767).

Interacts with RAB35 (GTP-bound form); the interaction is direct and probably recruits ACAP2 to membranes. Interacts with MICALL1; the interaction is indirect through RAB35.

Its subcellular location is the endosome membrane. The protein localises to the cell membrane. GAP activity stimulated by phosphatidylinositol 4,5-bisphosphate (PIP2) and phosphatidic acid. Its function is as follows. GTPase-activating protein (GAP) for ADP ribosylation factor 6 (ARF6). Doesn't show GAP activity for RAB35. In Mus musculus (Mouse), this protein is Arf-GAP with coiled-coil, ANK repeat and PH domain-containing protein 2 (Acap2).